A 235-amino-acid chain; its full sequence is Small ribosomal subunit protein eS4 (235 aa).

One can recognise an S4 RNA-binding domain in the interval Leu-37 to Glu-100.

It belongs to the eukaryotic ribosomal protein eS4 family.

The protein is Small ribosomal subunit protein eS4 of Methanosarcina barkeri (strain Fusaro / DSM 804).